A 192-amino-acid chain; its full sequence is Ion-translocating oxidoreductase complex subunit A (192 aa).

The next 6 helical transmembrane spans lie at 5-25, 39-59, 63-83, 102-122, 134-154, and 171-191; these read LLLL…FLGL, IGMG…AYLV, ILTP…VIAV, LLGI…VALL, IIYG…FAAM, and SIAM…TGLV.

The protein belongs to the NqrDE/RnfAE family. As to quaternary structure, the complex is composed of six subunits: RnfA, RnfB, RnfC, RnfD, RnfE and RnfG.

It localises to the cell inner membrane. Part of a membrane-bound complex that couples electron transfer with translocation of ions across the membrane. The chain is Ion-translocating oxidoreductase complex subunit A from Vibrio atlanticus (strain LGP32) (Vibrio splendidus (strain Mel32)).